The chain runs to 89 residues: Small ribosomal subunit protein uS15 (89 aa).

The protein belongs to the universal ribosomal protein uS15 family. As to quaternary structure, part of the 30S ribosomal subunit. Forms a bridge to the 50S subunit in the 70S ribosome, contacting the 23S rRNA.

One of the primary rRNA binding proteins, it binds directly to 16S rRNA where it helps nucleate assembly of the platform of the 30S subunit by binding and bridging several RNA helices of the 16S rRNA. Its function is as follows. Forms an intersubunit bridge (bridge B4) with the 23S rRNA of the 50S subunit in the ribosome. The polypeptide is Small ribosomal subunit protein uS15 (Mycolicibacterium vanbaalenii (strain DSM 7251 / JCM 13017 / BCRC 16820 / KCTC 9966 / NRRL B-24157 / PYR-1) (Mycobacterium vanbaalenii)).